The following is a 570-amino-acid chain: Vacuolar protein sorting-associated protein 45 (570 aa).

Phosphoserine occurs at positions 307 and 441.

The protein belongs to the STXBP/unc-18/SEC1 family. Interacts with STX6 and ZFYVE20. In terms of tissue distribution, ubiquitous; expression was highest in testis and in brain. Detected in every part of the brain.

Its subcellular location is the golgi apparatus membrane. The protein resides in the endosome membrane. In terms of biological role, may play a role in vesicle-mediated protein trafficking from the Golgi stack through the trans-Golgi network. The polypeptide is Vacuolar protein sorting-associated protein 45 (Vps45) (Rattus norvegicus (Rat)).